Here is a 41-residue protein sequence, read N- to C-terminus: Large ribosomal subunit protein bL36 (41 aa).

It belongs to the bacterial ribosomal protein bL36 family.

The chain is Large ribosomal subunit protein bL36 from Mesorhizobium japonicum (strain LMG 29417 / CECT 9101 / MAFF 303099) (Mesorhizobium loti (strain MAFF 303099)).